The following is a 44-amino-acid chain: Somatoliberin (44 aa).

A Leucine amide modification is found at L44.

This sequence belongs to the glucagon family.

Its subcellular location is the secreted. Its function is as follows. GRF is released by the hypothalamus and acts on the adenohypophyse to stimulate the secretion of growth hormone. This chain is Somatoliberin (GHRH), found in Sus scrofa (Pig).